A 245-amino-acid polypeptide reads, in one-letter code: 2,3-bisphosphoglycerate-dependent phosphoglycerate mutase (245 aa).

Residues arginine 8–asparagine 15, threonine 21–glycine 22, arginine 60, glutamate 87–tyrosine 90, lysine 98, arginine 114–arginine 115, and glycine 183–asparagine 184 contribute to the substrate site. Catalysis depends on histidine 9, which acts as the Tele-phosphohistidine intermediate. Residue glutamate 87 is the Proton donor/acceptor of the active site.

It belongs to the phosphoglycerate mutase family. BPG-dependent PGAM subfamily.

The enzyme catalyses (2R)-2-phosphoglycerate = (2R)-3-phosphoglycerate. The protein operates within carbohydrate degradation; glycolysis; pyruvate from D-glyceraldehyde 3-phosphate: step 3/5. Its function is as follows. Catalyzes the interconversion of 2-phosphoglycerate and 3-phosphoglycerate. This Bacillus anthracis (strain A0248) protein is 2,3-bisphosphoglycerate-dependent phosphoglycerate mutase.